The primary structure comprises 242 residues: Haloacid dehalogenase-like hydrolase domain-containing protein 3 (242 aa).

Belongs to the HAD-like hydrolase superfamily.

This chain is Haloacid dehalogenase-like hydrolase domain-containing protein 3 (hdhd3), found in Danio rerio (Zebrafish).